We begin with the raw amino-acid sequence, 150 residues long: D-aminoacyl-tRNA deacylase (150 aa).

Residues 136–137 carry the Gly-cisPro motif, important for rejection of L-amino acids motif; the sequence is GP.

Belongs to the DTD family. In terms of assembly, homodimer.

It is found in the cytoplasm. The enzyme catalyses glycyl-tRNA(Ala) + H2O = tRNA(Ala) + glycine + H(+). It carries out the reaction a D-aminoacyl-tRNA + H2O = a tRNA + a D-alpha-amino acid + H(+). An aminoacyl-tRNA editing enzyme that deacylates mischarged D-aminoacyl-tRNAs. Also deacylates mischarged glycyl-tRNA(Ala), protecting cells against glycine mischarging by AlaRS. Acts via tRNA-based rather than protein-based catalysis; rejects L-amino acids rather than detecting D-amino acids in the active site. By recycling D-aminoacyl-tRNA to D-amino acids and free tRNA molecules, this enzyme counteracts the toxicity associated with the formation of D-aminoacyl-tRNA entities in vivo and helps enforce protein L-homochirality. The polypeptide is D-aminoacyl-tRNA deacylase (Staphylococcus haemolyticus (strain JCSC1435)).